A 314-amino-acid chain; its full sequence is tRNA dimethylallyltransferase (314 aa).

ATP is bound at residue 13–20 (GPTAVGKT). A substrate-binding site is contributed by 15 to 20 (TAVGKT). The interval 38–41 (DSMQ) is interaction with substrate tRNA.

It belongs to the IPP transferase family. In terms of assembly, monomer. Mg(2+) is required as a cofactor.

The catalysed reaction is adenosine(37) in tRNA + dimethylallyl diphosphate = N(6)-dimethylallyladenosine(37) in tRNA + diphosphate. Catalyzes the transfer of a dimethylallyl group onto the adenine at position 37 in tRNAs that read codons beginning with uridine, leading to the formation of N6-(dimethylallyl)adenosine (i(6)A). This Bacillus licheniformis (strain ATCC 14580 / DSM 13 / JCM 2505 / CCUG 7422 / NBRC 12200 / NCIMB 9375 / NCTC 10341 / NRRL NRS-1264 / Gibson 46) protein is tRNA dimethylallyltransferase.